Consider the following 232-residue polypeptide: Phosphatidylserine decarboxylase proenzyme (232 aa).

Catalysis depends on Ser-190, which acts as the Schiff-base intermediate with substrate; via pyruvic acid. At Ser-190 the chain carries Pyruvic acid (Ser); by autocatalysis.

The protein belongs to the phosphatidylserine decarboxylase family. PSD-A subfamily. As to quaternary structure, heterodimer of a large membrane-associated beta subunit and a small pyruvoyl-containing alpha subunit. Requires pyruvate as cofactor. Is synthesized initially as an inactive proenzyme. Formation of the active enzyme involves a self-maturation process in which the active site pyruvoyl group is generated from an internal serine residue via an autocatalytic post-translational modification. Two non-identical subunits are generated from the proenzyme in this reaction, and the pyruvate is formed at the N-terminus of the alpha chain, which is derived from the carboxyl end of the proenzyme. The post-translation cleavage follows an unusual pathway, termed non-hydrolytic serinolysis, in which the side chain hydroxyl group of the serine supplies its oxygen atom to form the C-terminus of the beta chain, while the remainder of the serine residue undergoes an oxidative deamination to produce ammonia and the pyruvoyl prosthetic group on the alpha chain.

The protein resides in the cell membrane. The enzyme catalyses a 1,2-diacyl-sn-glycero-3-phospho-L-serine + H(+) = a 1,2-diacyl-sn-glycero-3-phosphoethanolamine + CO2. It participates in phospholipid metabolism; phosphatidylethanolamine biosynthesis; phosphatidylethanolamine from CDP-diacylglycerol: step 2/2. Catalyzes the formation of phosphatidylethanolamine (PtdEtn) from phosphatidylserine (PtdSer). The protein is Phosphatidylserine decarboxylase proenzyme of Rhodopseudomonas palustris (strain BisB5).